A 699-amino-acid chain; its full sequence is Elongation factor G (699 aa).

The region spanning 8 to 283 is the tr-type G domain; it reads EHIRNIGICA…AVVDFLPSPI (276 aa). GTP is bound by residues 17-24, 81-85, and 135-138; these read AHIDAGKT, DTPGH, and NKMD.

The protein belongs to the TRAFAC class translation factor GTPase superfamily. Classic translation factor GTPase family. EF-G/EF-2 subfamily.

It localises to the cytoplasm. In terms of biological role, catalyzes the GTP-dependent ribosomal translocation step during translation elongation. During this step, the ribosome changes from the pre-translocational (PRE) to the post-translocational (POST) state as the newly formed A-site-bound peptidyl-tRNA and P-site-bound deacylated tRNA move to the P and E sites, respectively. Catalyzes the coordinated movement of the two tRNA molecules, the mRNA and conformational changes in the ribosome. The sequence is that of Elongation factor G from Rickettsia peacockii (strain Rustic).